The sequence spans 411 residues: Putative competence-damage inducible protein (411 aa).

It belongs to the CinA family.

This Desulforamulus reducens (strain ATCC BAA-1160 / DSM 100696 / MI-1) (Desulfotomaculum reducens) protein is Putative competence-damage inducible protein.